The primary structure comprises 447 residues: Glutamate--tRNA ligase 1 (447 aa).

The short motif at 10–20 (PSPTGMLHVGN) is the 'HIGH' region element. Positions 240-244 (KISKR) match the 'KMSKS' region motif. K243 provides a ligand contact to ATP.

This sequence belongs to the class-I aminoacyl-tRNA synthetase family. Glutamate--tRNA ligase type 1 subfamily. As to quaternary structure, monomer.

The protein localises to the cytoplasm. It catalyses the reaction tRNA(Glu) + L-glutamate + ATP = L-glutamyl-tRNA(Glu) + AMP + diphosphate. In terms of biological role, catalyzes the attachment of glutamate to tRNA(Glu) in a two-step reaction: glutamate is first activated by ATP to form Glu-AMP and then transferred to the acceptor end of tRNA(Glu). In Rickettsia akari (strain Hartford), this protein is Glutamate--tRNA ligase 1.